Reading from the N-terminus, the 147-residue chain is Ubiquitin-conjugating enzyme E2-16 kDa (147 aa).

The UBC core domain occupies 1 to 147; it reads MAFKRINKEL…AREWTRKYAI (147 aa). Cys107 (glycyl thioester intermediate) is an active-site residue.

This sequence belongs to the ubiquitin-conjugating enzyme family.

It carries out the reaction S-ubiquitinyl-[E1 ubiquitin-activating enzyme]-L-cysteine + [E2 ubiquitin-conjugating enzyme]-L-cysteine = [E1 ubiquitin-activating enzyme]-L-cysteine + S-ubiquitinyl-[E2 ubiquitin-conjugating enzyme]-L-cysteine.. The protein operates within protein modification; protein ubiquitination. Functionally, catalyzes the covalent attachment of ubiquitin to other proteins. May also mediate selective proteolysis pathways. The protein is Ubiquitin-conjugating enzyme E2-16 kDa (UBC1) of Colletotrichum gloeosporioides (Anthracnose fungus).